Consider the following 255-residue polypeptide: Ribonuclease HII (255 aa).

One can recognise an RNase H type-2 domain in the interval 72-255 (AIICGIDEVG…KSFEPIKSLL (184 aa)). The a divalent metal cation site is built by Asp-78, Glu-79, and Asp-170.

The protein belongs to the RNase HII family. Mn(2+) is required as a cofactor. The cofactor is Mg(2+).

It localises to the cytoplasm. It catalyses the reaction Endonucleolytic cleavage to 5'-phosphomonoester.. Endonuclease that specifically degrades the RNA of RNA-DNA hybrids. In Staphylococcus aureus (strain USA300), this protein is Ribonuclease HII.